Reading from the N-terminus, the 399-residue chain is Salivary protein Tsal1 (399 aa).

The first 22 residues, Met1–Ala22, serve as a signal peptide directing secretion. The N-linked (GlcNAc...) asparagine glycan is linked to Asn268.

Belongs to the DNA/RNA non-specific endonuclease family. A divalent metal cation is required as a cofactor. Saliva (at protein level).

The protein localises to the secreted. Its function is as follows. Binds double-stranded DNA (dsDNA) with high affinity. Binds double-stranded RNA. Binds single-stranded DNA with lower affinity and with a preference for purine-rich sequences. Shows residual nuclease activity for dsDNA. May facilitate blood meal intake by lowering the local viscosity created by the release of host DNA. The chain is Salivary protein Tsal1 from Glossina morsitans morsitans (Savannah tsetse fly).